Here is a 251-residue protein sequence, read N- to C-terminus: 3-dehydroquinate dehydratase (251 aa).

Residues glutamate 47 to arginine 49 and arginine 83 contribute to the 3-dehydroquinate site. Histidine 144 functions as the Proton donor/acceptor in the catalytic mechanism. Catalysis depends on lysine 171, which acts as the Schiff-base intermediate with substrate. Residues arginine 214, serine 233, and glutamine 237 each coordinate 3-dehydroquinate.

Belongs to the type-I 3-dehydroquinase family. Homodimer.

The enzyme catalyses 3-dehydroquinate = 3-dehydroshikimate + H2O. Its pathway is metabolic intermediate biosynthesis; chorismate biosynthesis; chorismate from D-erythrose 4-phosphate and phosphoenolpyruvate: step 3/7. Functionally, involved in the third step of the chorismate pathway, which leads to the biosynthesis of aromatic amino acids. Catalyzes the cis-dehydration of 3-dehydroquinate (DHQ) and introduces the first double bond of the aromatic ring to yield 3-dehydroshikimate. The protein is 3-dehydroquinate dehydratase of Klebsiella pneumoniae subsp. pneumoniae (strain ATCC 700721 / MGH 78578).